Consider the following 224-residue polypeptide: Uracil-DNA glycosylase (224 aa).

The Proton acceptor role is filled by Asp61.

It belongs to the uracil-DNA glycosylase (UDG) superfamily. UNG family.

The protein localises to the cytoplasm. The catalysed reaction is Hydrolyzes single-stranded DNA or mismatched double-stranded DNA and polynucleotides, releasing free uracil.. Functionally, excises uracil residues from the DNA which can arise as a result of misincorporation of dUMP residues by DNA polymerase or due to deamination of cytosine. The protein is Uracil-DNA glycosylase of Mannheimia succiniciproducens (strain KCTC 0769BP / MBEL55E).